Consider the following 249-residue polypeptide: MDFLMSGLAACGACLFTNPLEVVKTRMQLQGELRAPGTYQRHYRNVFHAFITIGKVDGLAALQRGLAPALLYQFLMNGIRLGTYGLAEAGGYLHTAEGTLNPVRSAAAGALAGVMGAYLGSPIYMVKTHLQAQAATEIAVGHQYNHQIFPPQSWKVALAAAMVSGIAVVLAMTPFDVVSTRLYNQPTDAQGKGLMYRGLLDALLQTARTEGIFGMYKGIGASYFRLGPHTILSLFFWDQLRMVYYTYTK.

Solcar repeat units lie at residues 1–90 and 152–243; these read MDFL…AEAG and QSWK…LRMV. 4 helical membrane-spanning segments follow: residues 38-58, 59-79, 154-174, and 226-249; these read TYQRHYRNVFHAFITIGKVDG, LAALQRGLAPALLYQFLMNGI, WKVALAAAMVSGIAVVLAMTP, and LGPHTILSLFFWDQLRMVYYTYTK.

The protein belongs to the mitochondrial carrier (TC 2.A.29) family.

It localises to the mitochondrion inner membrane. It catalyses the reaction a dicarboxylate(in) + sulfate(out) = a dicarboxylate(out) + sulfate(in). Functionally, putative antiporter that exchanges dicarboxylates and sulfur oxoanions across the inner membrane of mitochondria. The polypeptide is Solute carrier family 25 member 35 (SLC25A35) (Bos taurus (Bovine)).